We begin with the raw amino-acid sequence, 574 residues long: 2-succinyl-5-enolpyruvyl-6-hydroxy-3-cyclohexene-1-carboxylate synthase (574 aa).

It belongs to the TPP enzyme family. MenD subfamily. Homodimer. Mg(2+) is required as a cofactor. It depends on Mn(2+) as a cofactor. The cofactor is thiamine diphosphate.

The catalysed reaction is isochorismate + 2-oxoglutarate + H(+) = 5-enolpyruvoyl-6-hydroxy-2-succinyl-cyclohex-3-ene-1-carboxylate + CO2. The protein operates within quinol/quinone metabolism; 1,4-dihydroxy-2-naphthoate biosynthesis; 1,4-dihydroxy-2-naphthoate from chorismate: step 2/7. It participates in quinol/quinone metabolism; menaquinone biosynthesis. Functionally, catalyzes the thiamine diphosphate-dependent decarboxylation of 2-oxoglutarate and the subsequent addition of the resulting succinic semialdehyde-thiamine pyrophosphate anion to isochorismate to yield 2-succinyl-5-enolpyruvyl-6-hydroxy-3-cyclohexene-1-carboxylate (SEPHCHC). The sequence is that of 2-succinyl-5-enolpyruvyl-6-hydroxy-3-cyclohexene-1-carboxylate synthase from Vibrio atlanticus (strain LGP32) (Vibrio splendidus (strain Mel32)).